A 146-amino-acid chain; its full sequence is Holo-[acyl-carrier-protein] synthase (146 aa).

Mg(2+) contacts are provided by Asp9 and Glu63.

This sequence belongs to the P-Pant transferase superfamily. AcpS family. Mg(2+) serves as cofactor.

It localises to the cytoplasm. The enzyme catalyses apo-[ACP] + CoA = holo-[ACP] + adenosine 3',5'-bisphosphate + H(+). Transfers the 4'-phosphopantetheine moiety from coenzyme A to a Ser of acyl-carrier-protein. The chain is Holo-[acyl-carrier-protein] synthase from Burkholderia orbicola (strain MC0-3).